Reading from the N-terminus, the 562-residue chain is Catalase T (562 aa).

Active-site residues include His64 and Asn137. Heme is bound at residue Tyr351.

This sequence belongs to the catalase family. Homotetramer. Requires heme as cofactor.

The protein localises to the cytoplasm. The catalysed reaction is 2 H2O2 = O2 + 2 H2O. In terms of biological role, occurs in almost all aerobically respiring organisms and serves to protect cells from the toxic effects of hydrogen peroxide. This is Catalase T (CTT1) from Saccharomyces cerevisiae (strain YJM789) (Baker's yeast).